The sequence spans 2245 residues: Basic helix-loop-helix domain-containing protein USF3 (2245 aa).

The segment at 1–28 (MPEMTENETPTKKQHRKKNRETHNAVER) is disordered. One can recognise a bHLH domain in the interval 18-69 (KNRETHNAVERHRKKKINAGINRIGELIPCSPALKQSKNMILDQAFKYITEL). Residues 77–112 (LLNGGNNEQAEEIKKLRKQLEEIQKENGRYIELLKA) are a coiled coil. Disordered regions lie at residues 271 to 290 (LHTC…QENP), 447 to 470 (SQTP…TSNH), 881 to 900 (SKSK…VTSE), 906 to 933 (AAKS…ALSD), 1015 to 1041 (KNPQ…IVDS), 1164 to 1238 (PSEA…SITS), 1307 to 1331 (IPNS…AKRA), 1460 to 1624 (IKQQ…VSGH), 1636 to 1664 (LEQQ…ERNR), 1736 to 1764 (TFKP…GNPV), 1777 to 1815 (ISQN…ENTC), 1834 to 1859 (GSQR…YNCP), and 1891 to 2031 (STLN…QPAT). Over residues 273-288 (TCLNDQNSSENKNGQE) the composition is skewed to polar residues. The segment covering 881–896 (SKSKSAEKSSPPSQES) has biased composition (low complexity). The span at 912–925 (STPNLQQETSQDKP) shows a compositional bias: polar residues. 2 stretches are compositionally biased toward polar residues: residues 1185–1202 (GTGQ…QGSI) and 1219–1238 (IKTS…SITS). Basic and acidic residues predominate over residues 1319 to 1331 (PSHESRKDSAKRA). The span at 1462 to 1478 (QQQQQQQQQQQQQQQQQ) shows a compositional bias: low complexity. Composition is skewed to polar residues over residues 1501 to 1520 (SVHS…QEVQ) and 1528 to 1538 (VQGTQTSQLSL). The span at 1560–1569 (QQMQQQMQQH) shows a compositional bias: low complexity. Over residues 1570 to 1585 (FGSSQTEKSCENPSTS) the composition is skewed to polar residues. The segment covering 1593 to 1624 (QNHLNQDIMHQQQDVGSRQQGSGVSSEHVSGH) has biased composition (low complexity). The span at 1636–1654 (LEQQMVSQPSIVTRSSDMT) shows a compositional bias: polar residues. Polar residues-rich tracts occupy residues 1904-1923 (GDIQ…SNPM) and 1998-2007 (SGNQRQSTVF).

It localises to the nucleus. Functionally, involved in the negative regulation of epithelial-mesenchymal transition, the process by which epithelial cells lose their polarity and adhesion properties to become mesenchymal cells with enhanced migration and invasive properties. The sequence is that of Basic helix-loop-helix domain-containing protein USF3 from Homo sapiens (Human).